We begin with the raw amino-acid sequence, 118 residues long: Small ribosomal subunit protein uS13 (118 aa).

Residues 94-118 (GLPVRGQRTKTNARTRKGPRKPIKK) are disordered.

This sequence belongs to the universal ribosomal protein uS13 family. In terms of assembly, part of the 30S ribosomal subunit. Forms a loose heterodimer with protein S19. Forms two bridges to the 50S subunit in the 70S ribosome.

Its function is as follows. Located at the top of the head of the 30S subunit, it contacts several helices of the 16S rRNA. In the 70S ribosome it contacts the 23S rRNA (bridge B1a) and protein L5 of the 50S subunit (bridge B1b), connecting the 2 subunits; these bridges are implicated in subunit movement. Contacts the tRNAs in the A and P-sites. This is Small ribosomal subunit protein uS13 from Haemophilus ducreyi (strain 35000HP / ATCC 700724).